A 123-amino-acid polypeptide reads, in one-letter code: Small ribosomal subunit protein uS12 (123 aa).

The tract at residues 1-23 is disordered; it reads MPTISQLVKKGREKVEKKTKSPA. At Asp89 the chain carries 3-methylthioaspartic acid.

This sequence belongs to the universal ribosomal protein uS12 family. As to quaternary structure, part of the 30S ribosomal subunit. Contacts proteins S8 and S17. May interact with IF1 in the 30S initiation complex.

With S4 and S5 plays an important role in translational accuracy. Its function is as follows. Interacts with and stabilizes bases of the 16S rRNA that are involved in tRNA selection in the A site and with the mRNA backbone. Located at the interface of the 30S and 50S subunits, it traverses the body of the 30S subunit contacting proteins on the other side and probably holding the rRNA structure together. The combined cluster of proteins S8, S12 and S17 appears to hold together the shoulder and platform of the 30S subunit. This is Small ribosomal subunit protein uS12 from Thermodesulfovibrio yellowstonii (strain ATCC 51303 / DSM 11347 / YP87).